We begin with the raw amino-acid sequence, 272 residues long: MTVSAAVQQQAGEAGLLPSHQARLDYRTGKGWSTAGVANGFVQGNLAIIPEQYAGAFHRFCQLNPKPCPIIGMSDPGNPFIPALGADLDIRTDVPRYRVWRDGEMVEEPTDLLAHWLDDLVTFVLGCSFSFEEALMADGLPIRHIEQGCRVPMYRTNIACTPSGPFAGPMVVSMRPFKPAQAIRAVQITTRFPAVHGAPVHLGHPDQIGIVDINKPDYGDPVPVAADEIPVFWACGVTPQAVISAAKLPFAITHAPGLMLITDLKNKDLAVL.

This sequence belongs to the D-glutamate cyclase family.

The sequence is that of Putative hydro-lyase BBta_2883 from Bradyrhizobium sp. (strain BTAi1 / ATCC BAA-1182).